A 415-amino-acid chain; its full sequence is Leucine-rich repeat-containing protein 34 (415 aa).

LRR repeat units lie at residues 246 to 272 (SLRY…LKSN) and 274 to 296 (TLEV…LSET).

Interacts with NPM1 and NCL. In terms of tissue distribution, expressed in testis where it specifically localizes to germ cells (at protein level). Not detected in other tissues tested (at protein level). Expressed in pluripotent embryonic stem cells and multipotent adult germline stem cells.

Its subcellular location is the nucleus. The protein localises to the nucleolus. It is found in the cytoplasm. Its function is as follows. Highly expressed in stem cells where it may be involved in regulation of pluripotency. In embryonic stem cells (ESCs), important for normal expression of the pluripotency regulators POU5F1/OCT4 and KLF4. Also important for expression of the ectodermal marker gene NES and the endodermal marker gene GATA4. Promotes stem cell proliferation in vitro. The polypeptide is Leucine-rich repeat-containing protein 34 (Mus musculus (Mouse)).